Here is a 262-residue protein sequence, read N- to C-terminus: Thiamine thiazole synthase (262 aa).

NAD(+)-binding positions include Ser-40, 59–60 (ER), Gly-67, Val-133, and 159–161 (HID). Positions 161 and 176 each coordinate Fe cation. NAD(+)-binding residues include Ser-179 and Met-226. Arg-236 lines the glycine pocket.

Belongs to the THI4 family. As to quaternary structure, homooctamer; tetramer of dimers. Fe(2+) serves as cofactor.

It catalyses the reaction hydrogen sulfide + glycine + NAD(+) = ADP-5-ethyl-4-methylthiazole-2-carboxylate + nicotinamide + 3 H2O + H(+). Its pathway is cofactor biosynthesis; thiamine diphosphate biosynthesis. Involved in the biosynthesis of the thiazole moiety of thiamine. Catalyzes the conversion of NAD and glycine to adenosine diphosphate 5-(2-hydroxyethyl)-4-methylthiazole-2-carboxylate (ADT), an adenylated thiazole intermediate, using free sulfide as a source of sulfur. The chain is Thiamine thiazole synthase from Methanococcus maripaludis (strain C7 / ATCC BAA-1331).